The chain runs to 200 residues: GMP synthase [glutamine-hydrolyzing] subunit A (200 aa).

In terms of domain architecture, Glutamine amidotransferase type-1 spans 3 to 193 (KIYVVDNGGQ…IGICASYREI (191 aa)). C80 serves as the catalytic Nucleophile. Residues H167 and E169 contribute to the active site.

Heterodimer composed of a glutamine amidotransferase subunit (A) and a GMP-binding subunit (B).

The enzyme catalyses XMP + L-glutamine + ATP + H2O = GMP + L-glutamate + AMP + diphosphate + 2 H(+). Its pathway is purine metabolism; GMP biosynthesis; GMP from XMP (L-Gln route): step 1/1. Its function is as follows. Catalyzes the synthesis of GMP from XMP. This chain is GMP synthase [glutamine-hydrolyzing] subunit A, found in Thermoplasma acidophilum (strain ATCC 25905 / DSM 1728 / JCM 9062 / NBRC 15155 / AMRC-C165).